Consider the following 331-residue polypeptide: UDP-glucose 4-epimerase (331 aa).

NAD(+)-binding positions include 11-12 (YI), 31-36 (DNLITG), 51-52 (DI), 73-77 (FAAFS), Asn-92, Thr-117, Tyr-141, Lys-145, and Phe-169. Thr-117 and Tyr-141 together coordinate substrate. Tyr-141 serves as the catalytic Proton acceptor. Substrate contacts are provided by residues Asn-170, 189-190 (HI), 206-208 (QIY), Arg-221, and 282-285 (RAGD).

The protein belongs to the NAD(P)-dependent epimerase/dehydratase family. In terms of assembly, homodimer. The cofactor is NAD(+).

The catalysed reaction is UDP-alpha-D-glucose = UDP-alpha-D-galactose. The protein operates within carbohydrate metabolism; galactose metabolism. This Lacticaseibacillus casei (Lactobacillus casei) protein is UDP-glucose 4-epimerase (galE).